The chain runs to 351 residues: Uroporphyrinogen decarboxylase (351 aa).

Residues 25–29 (RQAGR), aspartate 74, tyrosine 151, serine 206, and histidine 325 each bind substrate.

Belongs to the uroporphyrinogen decarboxylase family. As to quaternary structure, homodimer.

The protein resides in the cytoplasm. The enzyme catalyses uroporphyrinogen III + 4 H(+) = coproporphyrinogen III + 4 CO2. The protein operates within porphyrin-containing compound metabolism; protoporphyrin-IX biosynthesis; coproporphyrinogen-III from 5-aminolevulinate: step 4/4. Its function is as follows. Catalyzes the decarboxylation of four acetate groups of uroporphyrinogen-III to yield coproporphyrinogen-III. This Prosthecochloris aestuarii (strain DSM 271 / SK 413) protein is Uroporphyrinogen decarboxylase.